The primary structure comprises 239 residues: Metallo-beta-lactamase IND-1 (239 aa).

Positions 1–20 (MKKSIRFFIVSILLSPFASA) are cleaved as a signal peptide. His-96, His-98, Asp-100, His-159, and Cys-178 together coordinate Zn(2+). Lys-181 is a binding site for a beta-lactam. Position 220 (His-220) interacts with Zn(2+).

The protein belongs to the metallo-beta-lactamase superfamily. Class-B beta-lactamase family. Monomer. The cofactor is Zn(2+).

The protein resides in the periplasm. It carries out the reaction a beta-lactam + H2O = a substituted beta-amino acid. With respect to regulation, inhibited by chelating agents such as EDTA. Not susceptible to inactivation by the beta-lactamase-blocking agent clavulanic acid. Its function is as follows. Class B beta-lactamase which confers resistance to the beta-lactam antibiotics, including penicillins, cephalosporins and carbapenems. Acts via hydrolysis of the beta-lactam ring. Has penicillin-, cephalosporin- and carbapenem-hydrolyzing activities. This is Metallo-beta-lactamase IND-1 from Chryseobacterium indologenes (Flavobacterium indologenes).